Consider the following 138-residue polypeptide: Small ribosomal subunit protein uS12 (138 aa).

Residues 1–20 form a disordered region; sequence MPTISQLINHGRSAKTSKSK. A 3-methylthioaspartic acid modification is found at Asp-102. Positions 116-138 are disordered; the sequence is DAAGVDKRKQGRSIYGTKKPKEN.

It belongs to the universal ribosomal protein uS12 family. As to quaternary structure, part of the 30S ribosomal subunit. Contacts proteins S8 and S17. May interact with IF1 in the 30S initiation complex.

With S4 and S5 plays an important role in translational accuracy. Functionally, interacts with and stabilizes bases of the 16S rRNA that are involved in tRNA selection in the A site and with the mRNA backbone. Located at the interface of the 30S and 50S subunits, it traverses the body of the 30S subunit contacting proteins on the other side and probably holding the rRNA structure together. The combined cluster of proteins S8, S12 and S17 appears to hold together the shoulder and platform of the 30S subunit. This Metamycoplasma arthritidis (strain 158L3-1) (Mycoplasma arthritidis) protein is Small ribosomal subunit protein uS12.